The chain runs to 398 residues: 1-deoxy-D-xylulose 5-phosphate reductoisomerase (398 aa).

Residues threonine 10, glycine 11, serine 12, isoleucine 13, glycine 36, arginine 37, asparagine 38, and asparagine 124 each coordinate NADPH. Residue lysine 125 coordinates 1-deoxy-D-xylulose 5-phosphate. Glutamate 126 contributes to the NADPH binding site. Residue aspartate 150 coordinates Mn(2+). Positions 151, 152, 186, and 209 each coordinate 1-deoxy-D-xylulose 5-phosphate. Glutamate 152 provides a ligand contact to Mn(2+). Glycine 215 contributes to the NADPH binding site. 1-deoxy-D-xylulose 5-phosphate-binding residues include serine 222, asparagine 227, lysine 228, and glutamate 231. Position 231 (glutamate 231) interacts with Mn(2+).

Belongs to the DXR family. Homodimer. The cofactor is Mg(2+). Mn(2+) serves as cofactor.

The catalysed reaction is 2-C-methyl-D-erythritol 4-phosphate + NADP(+) = 1-deoxy-D-xylulose 5-phosphate + NADPH + H(+). It functions in the pathway isoprenoid biosynthesis; isopentenyl diphosphate biosynthesis via DXP pathway; isopentenyl diphosphate from 1-deoxy-D-xylulose 5-phosphate: step 1/6. Functionally, catalyzes the NADPH-dependent rearrangement and reduction of 1-deoxy-D-xylulose-5-phosphate (DXP) to 2-C-methyl-D-erythritol 4-phosphate (MEP). This Yersinia enterocolitica serotype O:8 / biotype 1B (strain NCTC 13174 / 8081) protein is 1-deoxy-D-xylulose 5-phosphate reductoisomerase.